Here is a 131-residue protein sequence, read N- to C-terminus: Small ribosomal subunit protein bS6 (131 aa).

The interval 96–131 (ITEASPMAKAKDERDSRRGPAGDRSYDEANAEEIAE) is disordered. Positions 104–122 (KAKDERDSRRGPAGDRSYD) are enriched in basic and acidic residues.

This sequence belongs to the bacterial ribosomal protein bS6 family.

Its function is as follows. Binds together with bS18 to 16S ribosomal RNA. This is Small ribosomal subunit protein bS6 from Shewanella oneidensis (strain ATCC 700550 / JCM 31522 / CIP 106686 / LMG 19005 / NCIMB 14063 / MR-1).